A 508-amino-acid chain; its full sequence is MADNPVLELLLRRLEVADGGLDSAELATQLGVEHQAVVGAVKSLQALGEVIEAELRSTKCWELTTEGEEIAREGSHEARVFRSIPLEGLVQSELMHLPSGKVGFSKAMSNKWIRVDKSAADGPRVFRVVDSIEDEVQKRLQLVQAGQAEKLAEKERNELRKRKLLTEVILKTYWVSKGKAFSTSVSKQEAELSPEMISSGSWRDRPFKPYNFSARGVLPDSGHLHPLLKVRSQFRQIFLEMGFTEMPTDNFIESSFWNFDALFQPQQHPARDQHDTFFLRDPAEALQLPMGYVQRVKRTHSQGGYGSQGYKYTWKLEEARKNLLRTHTTAASARALYQLAQKKPFTPAKYFSIDRVFRNETLDATHLAEFHQIEGVIADHGLTLGHLMGVLREFFTKLGITQLRFKPAYNPYTEPSMEVFSYHQGLKKWVEVGNSGVFRPEMLLPMGLPENVSVIAWGLSLERPTMIKYGINNIRELVGHKVNLQMVYDSPVCRLDIEPRSSKTQEAA.

Residue A2 is modified to N-acetylalanine. S193 and S301 each carry phosphoserine. Position 311 is an N6-acetyllysine (K311). L-phenylalanine-binding positions include T329, Q372–E374, and Y412. Mg(2+) is bound at residue E414. F438 is a binding site for L-phenylalanine.

It belongs to the class-II aminoacyl-tRNA synthetase family. Phe-tRNA synthetase alpha subunit type 2 subfamily. As to quaternary structure, heterotetramer; dimer of two heterodimers formed by FARSA and FARSB. It depends on Mg(2+) as a cofactor.

Its subcellular location is the cytoplasm. It catalyses the reaction tRNA(Phe) + L-phenylalanine + ATP = L-phenylalanyl-tRNA(Phe) + AMP + diphosphate + H(+). This is Phenylalanine--tRNA ligase alpha subunit (Farsa) from Mus musculus (Mouse).